An 81-amino-acid chain; its full sequence is Large ribosomal subunit protein bL31B (81 aa).

It belongs to the bacterial ribosomal protein bL31 family. Type B subfamily. Part of the 50S ribosomal subunit.

This chain is Large ribosomal subunit protein bL31B, found in Halalkalibacterium halodurans (strain ATCC BAA-125 / DSM 18197 / FERM 7344 / JCM 9153 / C-125) (Bacillus halodurans).